A 276-amino-acid chain; its full sequence is Undecaprenyl-diphosphatase (276 aa).

7 consecutive transmembrane segments (helical) span residues 42–62 (AVTA…IVYF), 88–108 (ALLG…GYLG), 116–136 (LRSL…IVYA), 149–169 (MRLP…VPGV), 187–207 (VAAT…AGIF), 222–242 (SLVV…AWLL), and 253–273 (FVWY…TGLV).

It belongs to the UppP family.

The protein resides in the cell membrane. The enzyme catalyses di-trans,octa-cis-undecaprenyl diphosphate + H2O = di-trans,octa-cis-undecaprenyl phosphate + phosphate + H(+). Catalyzes the dephosphorylation of undecaprenyl diphosphate (UPP). Confers resistance to bacitracin. This chain is Undecaprenyl-diphosphatase, found in Acidothermus cellulolyticus (strain ATCC 43068 / DSM 8971 / 11B).